A 504-amino-acid polypeptide reads, in one-letter code: Doublesex- and mab-3-related transcription factor A1 (504 aa).

Residues 1 to 13 are compositionally biased toward basic and acidic residues; sequence MERSQCGSRDRGV. The tract at residues 1 to 27 is disordered; it reads MERSQCGSRDRGVSGRPHLAPGLVVAA. A DNA-binding region (DM) is located at residues 97–144; it reads CARCRNHGVVSALKGHKRFCRWRDCACAKCTLIAERQRVMAAQVALRR. 2 disordered regions span residues 170–192 and 266–307; these read GRAS…AAGA and SISE…NESE. Positions 293 to 306 are enriched in low complexity; the sequence is RSLSSSDLESGNES. The 36-residue stretch at 327 to 362 folds into the DMA domain; sequence RDPLDILTKIFPNYRRSRLEGILRFCKGDVVQAIEQ.

This sequence belongs to the DMRT family. As to expression, expressed in liver, kidney, pancreas, prostate and weakly detected in testis and ovary.

The protein localises to the nucleus. This is Doublesex- and mab-3-related transcription factor A1 (DMRTA1) from Homo sapiens (Human).